Here is an 899-residue protein sequence, read N- to C-terminus: RNA-binding motif protein 25 (899 aa).

Over residues 1-20 (MADESSSPATGDPNSQKPES) the composition is skewed to polar residues. The segment at 1–112 (MADESSSPAT…SMPQYQPQPG (112 aa)) is disordered. Residues 26–63 (IPNPNPNPSLTPPPPQQHSQPPVAPLVPPGPPYAPPAQ) are compositionally biased toward pro residues. In terms of domain architecture, RRM spans 204–281 (TTIYIGKIAT…QELLVNVNQA (78 aa)). Disordered stretches follow at residues 298–572 (KKAK…EQNL) and 611–778 (GESA…KESG). Basic and acidic residues-rich tracts occupy residues 317 to 340 (EQDK…KENI) and 354 to 372 (EADR…ERLK). The span at 375 to 384 (PLPPPPPPPA) shows a compositional bias: pro residues. Over residues 430–505 (WSKRNDRRSR…QYEKEKEKEK (76 aa)) the composition is skewed to basic and acidic residues. Residues 434–578 (NDRRSRERGE…EQNLQQQQLD (145 aa)) adopt a coiled-coil conformation. A compositionally biased stretch (acidic residues) spans 515–524 (YEEEEEEDDD). The short motif at 526–533 (SRRRWHRA) is the Nuclear localization signal 1 element. The span at 533 to 568 (AALDERRRRQLREKEDDLADRLKEEEEVAEAKRSAE) shows a compositional bias: basic and acidic residues. Residues 626–640 (GSGNESMAIDNNSGS) show a composition bias toward polar residues. 2 stretches are compositionally biased toward basic and acidic residues: residues 723-733 (PKEETIETEKQ) and 740-778 (DKAS…KESG). The Nuclear localization signal 2 motif lies at 735-742 (SRRSHDKA). Positions 802–899 (EDLFSYEINW…EAGVPVKSKA (98 aa)) constitute a PWI domain.

In terms of assembly, specifically associates with functional splicing complexes. Associates with exon junction complex (EJC) proteins. Post-translationally, phosphorylated; the phosphorylation level is repressed by abscisic acid (ABA).

The protein localises to the nucleus. In terms of biological role, RNA-binding protein that acts as a regulator of alternative pre-mRNA splicing. Negative regulator of responses to abscisic acid (ABA), including in early development. This is RNA-binding motif protein 25 from Arabidopsis thaliana (Mouse-ear cress).